A 164-amino-acid chain; its full sequence is 6,7-dimethyl-8-ribityllumazine synthase (164 aa).

5-amino-6-(D-ribitylamino)uracil contacts are provided by residues Tyr27, Ala58–Glu60, and Cys87–Ile89. Glu92–Thr93 contributes to the (2S)-2-hydroxy-3-oxobutyl phosphate binding site. His95 functions as the Proton donor in the catalytic mechanism. Asn120 contributes to the 5-amino-6-(D-ribitylamino)uracil binding site. Arg134 lines the (2S)-2-hydroxy-3-oxobutyl phosphate pocket.

This sequence belongs to the DMRL synthase family.

The catalysed reaction is (2S)-2-hydroxy-3-oxobutyl phosphate + 5-amino-6-(D-ribitylamino)uracil = 6,7-dimethyl-8-(1-D-ribityl)lumazine + phosphate + 2 H2O + H(+). It participates in cofactor biosynthesis; riboflavin biosynthesis; riboflavin from 2-hydroxy-3-oxobutyl phosphate and 5-amino-6-(D-ribitylamino)uracil: step 1/2. Its function is as follows. Catalyzes the formation of 6,7-dimethyl-8-ribityllumazine by condensation of 5-amino-6-(D-ribitylamino)uracil with 3,4-dihydroxy-2-butanone 4-phosphate. This is the penultimate step in the biosynthesis of riboflavin. The chain is 6,7-dimethyl-8-ribityllumazine synthase from Methylocella silvestris (strain DSM 15510 / CIP 108128 / LMG 27833 / NCIMB 13906 / BL2).